A 447-amino-acid chain; its full sequence is Phosphatidylinositol N-acetylglucosaminyltransferase subunit A (447 aa).

Over 1–387 (MAEPPKLRVL…NRSLLERLMR (387 aa)) the chain is Cytoplasmic. Residues 388 to 408 (FLSCGAWAGKLFCMVMILDYL) traverse the membrane as a helical segment. Residues 409–447 (LWRLLQLLQPDEDIEEAPDICLCHHRGVEVSEGLRKKIK) lie on the Lumenal side of the membrane.

Belongs to the glycosyltransferase group 1 family. Glycosyltransferase 4 subfamily. As to expression, expressed in roots, stems, leaves, flowers and pollen grains.

Its subcellular location is the endoplasmic reticulum membrane. It carries out the reaction a 1,2-diacyl-sn-glycero-3-phospho-(1D-myo-inositol) + UDP-N-acetyl-alpha-D-glucosamine = a 6-(N-acetyl-alpha-D-glucosaminyl)-1-(1,2-diacyl-sn-glycero-3-phospho)-1D-myo-inositol + UDP + H(+). Its pathway is glycolipid biosynthesis; glycosylphosphatidylinositol-anchor biosynthesis. Its function is as follows. Necessary for the synthesis of N-acetylglucosaminyl-phosphatidylinositol, the very early intermediate in GPI-anchor biosynthesis. Required for pollen germination and pollen tube growth. The protein is Phosphatidylinositol N-acetylglucosaminyltransferase subunit A of Arabidopsis thaliana (Mouse-ear cress).